The following is a 353-amino-acid chain: Lipase-specific foldase (353 aa).

At 1-19 (MAQADRPARGGLAARPMRG) the chain is on the cytoplasmic side. A helical transmembrane segment spans residues 20–40 (ASFALAGLVACAACAAVVLWL). Residues 41 to 353 (RPAAPSPAPA…AASLDRGAGG (313 aa)) lie on the Periplasmic side of the membrane.

This sequence belongs to the lipase chaperone family. As to quaternary structure, monomer. Interacts with lipase (lip).

The protein resides in the cell inner membrane. Its function is as follows. Involved in the folding of the extracellular lipase (lip) during its passage through the periplasm. The protein is Lipase-specific foldase of Burkholderia plantarii.